Here is a 190-residue protein sequence, read N- to C-terminus: Dynactin subunit 6 (190 aa).

The residue at position 186 (Thr186) is a Phosphothreonine; by CDK1.

The protein belongs to the dynactin subunits 5/6 family. Dynactin subunit 6 subfamily. Subunit of dynactin, a multiprotein complex part of a tripartite complex with dynein and a adapter, such as BICDL1, BICD2 or HOOK3. The dynactin complex is built around ACTR1A/ACTB filament and consists of an actin-related filament composed of a shoulder domain, a pointed end and a barbed end. Its length is defined by its flexible shoulder domain. The soulder is composed of 2 DCTN1 subunits, 4 DCTN2 and 2 DCTN3. The 4 DCNT2 (via N-terminus) bind the ACTR1A filament and act as molecular rulers to determine the length. The pointed end is important for binding dynein-dynactin cargo adapters. Consists of 4 subunits: ACTR10, DCNT4, DCTN5 and DCTN6. Within the complex DCTN6 forms a heterodimer with DCTN5. The barbed end is composed of a CAPZA1:CAPZB heterodimers, which binds ACTR1A/ACTB filament and dynactin and stabilizes dynactin. Interacts with PLK1. Interacts with N4BP2L1. Phosphorylation at Thr-186 by CDK1 during mitotic prometaphase creates a binding site for PLK1 that facilitates its recruitment to kinetochores.

It localises to the cytoplasm. The protein localises to the cytoskeleton. The protein resides in the chromosome. It is found in the centromere. Its subcellular location is the kinetochore. Functionally, part of the dynactin complex that activates the molecular motor dynein for ultra-processive transport along microtubules. This is Dynactin subunit 6 (DCTN6) from Pongo abelii (Sumatran orangutan).